Consider the following 844-residue polypeptide: Penicillin-binding protein 1B (844 aa).

Basic and acidic residues predominate over residues 1-10; that stretch reads MAGNDREPIG. The tract at residues 1–60 is disordered; the sequence is MAGNDREPIGRKGKPTRPVKQKVSRRRYEDDDDYDDYDDYEDEEPMPRKGKGKGKGRKPR. Over 1 to 63 the chain is Cytoplasmic; the sequence is MAGNDREPIG…GKGRKPRGKR (63 aa). Residues 11 to 25 show a composition bias toward basic residues; the sequence is RKGKPTRPVKQKVSR. The segment covering 30 to 44 has biased composition (acidic residues); sequence DDDDYDDYDDYEDEE. Residues 48–60 show a composition bias toward basic residues; it reads RKGKGKGKGRKPR. The helical; Signal-anchor for type II membrane protein transmembrane segment at 64–87 threads the bilayer; that stretch reads GWLWLLLKLAIVFAVLIAIYGVYL. The interval 88–250 is membrane association; it reads DQKIRSRIDG…DGISLYSIGR (163 aa). Over 88–844 the chain is Periplasmic; the sequence is DQKIRSRIDG…GWIKDMFGSN (757 aa). The uvrB domain 2 homolog stretch occupies residues 109–200; the sequence is RMVNLEPDMT…QFGFFRLDPR (92 aa). The interval 195–367 is transglycosylase; sequence FRLDPRLITM…SIYNPWRNPK (173 aa). Glu-233 functions as the Proton donor; for transglycosylase activity in the catalytic mechanism. The interval 444 to 736 is transpeptidase; sequence SVAQDAAEKA…NNQPTKLYGA (293 aa). Ser-510 (acyl-ester intermediate; for transpeptidase activity) is an active-site residue. Positions 793–825 are enriched in low complexity; it reads LCQQSEMQQQPSGNPFDQSSQPQQQPQQQPAQQ. The interval 793–835 is disordered; it reads LCQQSEMQQQPSGNPFDQSSQPQQQPQQQPAQQEQKDSDGVAG.

It in the N-terminal section; belongs to the glycosyltransferase 51 family. This sequence in the C-terminal section; belongs to the transpeptidase family. In terms of assembly, forms a trimeric complex with MipA and MltA. Has also been shown to exist as monomer or homodimer; homodimer of Alpha and Gamma isozymes can be found. Interacts with UvrA, FtsL and FtsN.

The protein resides in the cell inner membrane. The enzyme catalyses [GlcNAc-(1-&gt;4)-Mur2Ac(oyl-L-Ala-gamma-D-Glu-L-Lys-D-Ala-D-Ala)](n)-di-trans,octa-cis-undecaprenyl diphosphate + beta-D-GlcNAc-(1-&gt;4)-Mur2Ac(oyl-L-Ala-gamma-D-Glu-L-Lys-D-Ala-D-Ala)-di-trans,octa-cis-undecaprenyl diphosphate = [GlcNAc-(1-&gt;4)-Mur2Ac(oyl-L-Ala-gamma-D-Glu-L-Lys-D-Ala-D-Ala)](n+1)-di-trans,octa-cis-undecaprenyl diphosphate + di-trans,octa-cis-undecaprenyl diphosphate + H(+). It carries out the reaction Preferential cleavage: (Ac)2-L-Lys-D-Ala-|-D-Ala. Also transpeptidation of peptidyl-alanyl moieties that are N-acyl substituents of D-alanine.. It functions in the pathway cell wall biogenesis; peptidoglycan biosynthesis. Functionally, cell wall formation. Synthesis of cross-linked peptidoglycan from the lipid intermediates. The enzyme has a penicillin-insensitive transglycosylase N-terminal domain (formation of linear glycan strands) and a penicillin-sensitive transpeptidase C-terminal domain (cross-linking of the peptide subunits). The protein is Penicillin-binding protein 1B (mrcB) of Escherichia coli (strain K12).